Here is a 188-residue protein sequence, read N- to C-terminus: Elongation factor P (188 aa).

N6-(3,6-diaminohexanoyl)-5-hydroxylysine is present on lysine 34.

The protein belongs to the elongation factor P family. In terms of processing, may be beta-lysylated on the epsilon-amino group of Lys-34 by the combined action of EpmA and EpmB, and then hydroxylated on the C5 position of the same residue by EpmC (if this protein is present). Lysylation is critical for the stimulatory effect of EF-P on peptide-bond formation. The lysylation moiety may extend toward the peptidyltransferase center and stabilize the terminal 3-CCA end of the tRNA. Hydroxylation of the C5 position on Lys-34 may allow additional potential stabilizing hydrogen-bond interactions with the P-tRNA.

Its subcellular location is the cytoplasm. It participates in protein biosynthesis; polypeptide chain elongation. In terms of biological role, involved in peptide bond synthesis. Alleviates ribosome stalling that occurs when 3 or more consecutive Pro residues or the sequence PPG is present in a protein, possibly by augmenting the peptidyl transferase activity of the ribosome. Modification of Lys-34 is required for alleviation. The sequence is that of Elongation factor P from Actinobacillus succinogenes (strain ATCC 55618 / DSM 22257 / CCUG 43843 / 130Z).